A 427-amino-acid chain; its full sequence is NAD kinase 2, mitochondrial (427 aa).

The transit peptide at Met1–Ala33 directs the protein to the mitochondrion.

It belongs to the NAD kinase family. In terms of assembly, homodimer.

It is found in the mitochondrion. It carries out the reaction NAD(+) + ATP = ADP + NADP(+) + H(+). Its function is as follows. Mitochondrial NAD(+) kinase that phosphorylates NAD(+) to yield NADP(+). Can use both ATP or inorganic polyphosphate as the phosphoryl donor. This chain is NAD kinase 2, mitochondrial (nadk2), found in Xenopus tropicalis (Western clawed frog).